The following is a 288-amino-acid chain: MGNDKRVRKPEWLKISIGANERYTETKRIVESHCLHTICSSGRCPNMGECWGKGTATFMIAGDICTRSCKFCNTQTGRPLPLDPDEPAHVAESIALMKLSHAVITSVDRDDLPDLGAAHWAQTIREIKRLNPETTTEVLIPDFQGRKELIDQVIKACPEIISHNMETVKRISPQVRSAANYHTSLEVIRQIAESGITAKSGIMVGLGETPAEVEELMDDLISVGCKILTIGQYLQPTHKHFPVAAYITPEQFAVYKETGLKKGFEQVESAPLVRSSYHAEKHIRFNNK.

[4Fe-4S] cluster is bound by residues cysteine 39, cysteine 44, cysteine 50, cysteine 65, cysteine 69, cysteine 72, and serine 276. The Radical SAM core domain occupies 51-265 (WGKGTATFMI…KETGLKKGFE (215 aa)).

Belongs to the radical SAM superfamily. Lipoyl synthase family. [4Fe-4S] cluster is required as a cofactor.

It localises to the cytoplasm. The catalysed reaction is [[Fe-S] cluster scaffold protein carrying a second [4Fe-4S](2+) cluster] + N(6)-octanoyl-L-lysyl-[protein] + 2 oxidized [2Fe-2S]-[ferredoxin] + 2 S-adenosyl-L-methionine + 4 H(+) = [[Fe-S] cluster scaffold protein] + N(6)-[(R)-dihydrolipoyl]-L-lysyl-[protein] + 4 Fe(3+) + 2 hydrogen sulfide + 2 5'-deoxyadenosine + 2 L-methionine + 2 reduced [2Fe-2S]-[ferredoxin]. It participates in protein modification; protein lipoylation via endogenous pathway; protein N(6)-(lipoyl)lysine from octanoyl-[acyl-carrier-protein]: step 2/2. Catalyzes the radical-mediated insertion of two sulfur atoms into the C-6 and C-8 positions of the octanoyl moiety bound to the lipoyl domains of lipoate-dependent enzymes, thereby converting the octanoylated domains into lipoylated derivatives. The sequence is that of Lipoyl synthase from Bacteroides fragilis (strain YCH46).